Here is a 383-residue protein sequence, read N- to C-terminus: uncharacterized protein (383 aa).

The protein belongs to the peptidase M20 family.

This is an uncharacterized protein from Staphylococcus aureus (strain MRSA252).